We begin with the raw amino-acid sequence, 294 residues long: 7,8-dihydropterin-6-methyl-4-(beta-D-ribofuranosyl)-aminobenzene-5'-phosphate synthase (294 aa).

4 residues coordinate substrate: Glu-116, Asp-186, Lys-228, and His-265.

The protein belongs to the metallo-beta-lactamase superfamily. The cofactor is Mg(2+).

The catalysed reaction is 4-(beta-D-ribofuranosyl)aminobenzene 5'-phosphate + (7,8-dihydropterin-6-yl)methyl diphosphate = N-[(7,8-dihydropterin-6-yl)methyl]-4-(beta-D-ribofuranosyl)aniline 5'-phosphate + diphosphate. Its pathway is cofactor biosynthesis; 5,6,7,8-tetrahydromethanopterin biosynthesis. Functionally, catalyzes the condensation of 6-hydroxymethyl-7,8-dihydropterin pyrophosphate (DHPP) with 4-(beta-D-ribofuranosyl)-aminobenzene-5'-phosphate (beta-RFA-P) to form 7,8-dihydropterin-6-methyl-4-(beta-D-ribofuranosyl)-aminobenzene-5'-phosphate, a precursor in the biosynthesis of 5,6,7,8-tetrahydromethanopterin (H4MPT). To a lesser extent, is able to condense beta-RFA-P with another arylamine, 1-(4-aminophenyl)-1-deoxy-D-ribitol (APDR), to form 7,8-dihydropterin-6-methyl-1-(4-aminophenyl)-1-deoxy-D-ribitol. Dephosphorylated beta-RFA-P is not a substrate. The protein is 7,8-dihydropterin-6-methyl-4-(beta-D-ribofuranosyl)-aminobenzene-5'-phosphate synthase of Methanocaldococcus jannaschii (strain ATCC 43067 / DSM 2661 / JAL-1 / JCM 10045 / NBRC 100440) (Methanococcus jannaschii).